We begin with the raw amino-acid sequence, 405 residues long: Enoyl-[acyl-carrier-protein] reductase [NADH] (405 aa).

NAD(+) contacts are provided by residues 51–56 (GASSGY), 77–78 (FE), 114–115 (DA), and 142–143 (LA). Tyr-228 provides a ligand contact to substrate. Tyr-238 (proton donor) is an active-site residue. NAD(+) is bound by residues Lys-247 and 276–278 (VVT).

The protein belongs to the TER reductase family. As to quaternary structure, monomer.

The catalysed reaction is a 2,3-saturated acyl-[ACP] + NAD(+) = a (2E)-enoyl-[ACP] + NADH + H(+). It participates in lipid metabolism; fatty acid biosynthesis. Its function is as follows. Involved in the final reduction of the elongation cycle of fatty acid synthesis (FAS II). Catalyzes the reduction of a carbon-carbon double bond in an enoyl moiety that is covalently linked to an acyl carrier protein (ACP). The chain is Enoyl-[acyl-carrier-protein] reductase [NADH] from Chromohalobacter salexigens (strain ATCC BAA-138 / DSM 3043 / CIP 106854 / NCIMB 13768 / 1H11).